Here is a 375-residue protein sequence, read N- to C-terminus: Hydrogenase-1 small chain (375 aa).

Residues 1–47 (MNTNNEETFYQAMRRKGVSRRSFLKYCSLAATSLGLGAAMTPRIAWA) constitute a signal peptide (tat-type signal). [4Fe-4S] cluster contacts are provided by C64, C67, C162, C196, H234, C237, C262, and C268. C277, C296, and C299 together coordinate [3Fe-4S] cluster. The interval 353–375 (HNRHKQQLADAGQQSPDNEDKQA) is disordered.

The protein belongs to the [NiFe]/[NiFeSe] hydrogenase small subunit family. As to quaternary structure, heterodimer of a large and a small subunit. [4Fe-4S] cluster is required as a cofactor. The cofactor is [3Fe-4S] cluster. In terms of processing, predicted to be exported by the Tat system. The position of the signal peptide cleavage has not been experimentally proven.

The protein localises to the cell membrane. It catalyses the reaction H2 + A = AH2. This chain is Hydrogenase-1 small chain (hyaA), found in Citrobacter freundii.